Here is a 173-residue protein sequence, read N- to C-terminus: RNA polymerase sigma factor YlaC (173 aa).

The protein belongs to the sigma-70 factor family. ECF subfamily.

In terms of biological role, sigma factors are initiation factors that promote the attachment of RNA polymerase to specific initiation sites and are then released. This sigma factor contributes to oxidative stress resistance. This Bacillus subtilis (strain 168) protein is RNA polymerase sigma factor YlaC (ylaC).